The following is a 200-amino-acid chain: Peptidyl-tRNA hydrolase (200 aa).

Tyr-15 contacts tRNA. The active-site Proton acceptor is His-20. Residues Phe-66, Asn-68, and Asn-114 each contribute to the tRNA site.

The protein belongs to the PTH family. In terms of assembly, monomer.

The protein localises to the cytoplasm. The enzyme catalyses an N-acyl-L-alpha-aminoacyl-tRNA + H2O = an N-acyl-L-amino acid + a tRNA + H(+). Functionally, hydrolyzes ribosome-free peptidyl-tRNAs (with 1 or more amino acids incorporated), which drop off the ribosome during protein synthesis, or as a result of ribosome stalling. Its function is as follows. Catalyzes the release of premature peptidyl moieties from peptidyl-tRNA molecules trapped in stalled 50S ribosomal subunits, and thus maintains levels of free tRNAs and 50S ribosomes. The chain is Peptidyl-tRNA hydrolase from Ralstonia nicotianae (strain ATCC BAA-1114 / GMI1000) (Ralstonia solanacearum).